The sequence spans 435 residues: Membrane-bound ghrelin O-acyltransferase MBOAT4 (435 aa).

The Lumenal segment spans residues 1–5 (MDWLQ). Residues 6–26 (FFFLHPVSLYQGAAFPFALLF) traverse the membrane as a helical segment. Residues 27 to 40 (NYLCITESFPTRAR) lie on the Cytoplasmic side of the membrane. The chain crosses the membrane as a helical span at residues 41–56 (YLFLLAGGGVLALAAM). Residues 57-59 (GPY) lie on the Lumenal side of the membrane. The helical transmembrane segment at 60–76 (ALLIFIPALCAVAMISS) threads the bilayer. At 77–82 (LSPQEV) the chain is on the cytoplasmic side. A helical transmembrane segment spans residues 83-101 (HGLTFFFQMGWQTLCHLGL). Over 102–120 (HYKEYYLCEPPPVRFYITL) the chain is Lumenal. A helical transmembrane segment spans residues 121–136 (SSLMLLTQRVTSLSLD). Topologically, residues 137 to 206 (ISEGKVEAAW…YPSISFWALT (70 aa)) are cytoplasmic. A helical membrane pass occupies residues 207–227 (WRGLQILGLECLKVALRRVVS). The Lumenal segment spans residues 228 to 240 (AGAGLDDCQRLEC). The chain crosses the membrane as a helical span at residues 241–261 (IYIMWSTAGLFKLTYYSHWIL). Topologically, residues 262-324 (DDSLLHAAGF…KRLVFQRSRR (63 aa)) are cytoplasmic. Catalysis depends on residues Asn307 and His338. Residues 325–338 (WPVLQTFAFSAWWH) traverse the membrane as a helical segment. The Lumenal portion of the chain corresponds to 339–340 (GL). A helical transmembrane segment spans residues 341 to 357 (HPGQVFGFLCWSVMVKA). The Cytoplasmic segment spans residues 358 to 376 (DYLIHTFANGCIRSWPLRL). A helical membrane pass occupies residues 377–397 (LYRSLTWAHTQIIIAYVMLAV). Over 398-407 (EGRSFSSLCR) the chain is Lumenal. The chain crosses the membrane as a helical span at residues 408-428 (LCCSYNSIFPVTYCLLLFLLA). At 429-435 (RRKHKCN) the chain is on the cytoplasmic side.

The protein belongs to the membrane-bound acyltransferase family. In terms of assembly, monomer. Not glycosylated.

The protein resides in the endoplasmic reticulum membrane. It catalyses the reaction octanoyl-CoA + L-seryl-[protein] = O-octanoyl-L-seryl-[protein] + CoA. It carries out the reaction decanoyl-CoA + L-seryl-[protein] = O-decanoyl-L-seryl-[protein] + CoA. The enzyme catalyses L-seryl-[protein] + acetyl-CoA = O-acetyl-L-seryl-[protein] + CoA. The catalysed reaction is L-seryl-[protein] + butanoyl-CoA = O-butanoyl-L-seryl-[protein] + CoA. It catalyses the reaction pentanoyl-CoA + L-seryl-[protein] = O-pentanoyl-L-seryl-[protein] + CoA. It carries out the reaction hexanoyl-CoA + L-seryl-[protein] = O-hexanoyl-L-seryl-[protein] + CoA. The enzyme catalyses heptanoyl-CoA + L-seryl-[protein] = O-heptanoyl-L-seryl-[protein] + CoA. The catalysed reaction is nonanoyl-CoA + L-seryl-[protein] = O-nonanoyl-L-seryl-[protein] + CoA. It catalyses the reaction L-seryl-[protein] + dodecanoyl-CoA = O-dodecanoyl-L-seryl-[protein] + CoA. It carries out the reaction L-seryl-[protein] + tetradecanoyl-CoA = O-tetradecanoyl-L-seryl-[protein] + CoA. The enzyme catalyses a fatty acyl-CoA + L-seryl-[protein] = O-fatty acyl-L-seryl-[protein] + CoA. Catalyzes ghrelin acylation at 'Ser-3' using preferentially octanoyl-CoA, hexanoyl-CoA and decanoyl-CoA as acyl-CoA donors leading to ghrelin activity. In vitro uses also acyl-CoA donors of different lengths from short-chain (C2) to long-chain fatty acids (C16) knowing that acyl-CoA donors from butanoyl-CoA (C4) to dodecanoyl-CoA (C12) are more efficient compared to longer acyl-CoA donors, such as myristoyl-CoA (C14) and palmitoyl-CoA (C16) that are not efficient. The chain is Membrane-bound ghrelin O-acyltransferase MBOAT4 from Rattus norvegicus (Rat).